The chain runs to 231 residues: Ribonuclease 3 (231 aa).

Positions 5–134 (QEKLKNDYGL…FLGALFIDQG (130 aa)) constitute an RNase III domain. Residue glutamate 47 coordinates Mg(2+). Aspartate 51 is a catalytic residue. Mg(2+)-binding residues include asparagine 120 and glutamate 123. Glutamate 123 is an active-site residue. A DRBM domain is found at 160-229 (DYKTELQEVL…AENAIKGQNH (70 aa)).

Belongs to the ribonuclease III family. In terms of assembly, homodimer. Mg(2+) serves as cofactor.

It is found in the cytoplasm. The catalysed reaction is Endonucleolytic cleavage to 5'-phosphomonoester.. Functionally, digests double-stranded RNA. Involved in the processing of primary rRNA transcript to yield the immediate precursors to the large and small rRNAs (23S and 16S). Processes some mRNAs, and tRNAs when they are encoded in the rRNA operon. Processes pre-crRNA and tracrRNA of type II CRISPR loci if present in the organism. The protein is Ribonuclease 3 of Lactococcus lactis subsp. cremoris (strain SK11).